We begin with the raw amino-acid sequence, 126 residues long: uncharacterized protein (126 aa).

Residues 55–77 traverse the membrane as a helical segment; it reads MLLINSNLVLSGLLLFIDVYRAA.

Its subcellular location is the membrane. This is an uncharacterized protein from Dictyostelium discoideum (Social amoeba).